We begin with the raw amino-acid sequence, 70 residues long: Frenatin 4.1 (70 aa).

The signal sequence occupies residues 1–22 (MAFLKKSLFLVLFLGLVNLSIC). The propeptide occupies 23-46 (EEEKREEENKEEEDENEALSEVKR). The residue at position 68 (K68) is a Lysine amide.

The protein belongs to the frog skin active peptide (FSAP) family. Frenatin subfamily. In terms of tissue distribution, expressed by the skin glands.

The protein localises to the secreted. It is found in the target cell membrane. Peptide with unknown function. Does not show antimicrobial activity against S.aureus (MIC&gt;512 ug/mL), E.coli (MIC&gt;512 ug/mL) and C.albicans (MIC&gt;512 ug/mL). Does not show hemolytic activity. Functionally, antimicrobial peptide with activity against E.coli (MIC=128 ug/mL or 54 uM) and C.albicans (MIC=256 ug/mL or 108 uM). Does not show activity against S.aureus (MIC&gt;512 ug/mL). Does not show hemolytic activity. In Nyctimystes infrafrenatus (White-lipped tree frog), this protein is Frenatin 4.1.